Reading from the N-terminus, the 74-residue chain is uncharacterized protein (74 aa).

A helical membrane pass occupies residues 8–30 (LAAAVSSSAASAGVSRIAASAMA).

Its subcellular location is the mitochondrion outer membrane. This is an uncharacterized protein from Saccharomyces cerevisiae (strain ATCC 204508 / S288c) (Baker's yeast).